Consider the following 271-residue polypeptide: Type III pantothenate kinase (271 aa).

5-12 is an ATP binding site; it reads DISNSVTK. Substrate contacts are provided by residues Tyr85 and 92–95; that span reads GADR. Asp94 acts as the Proton acceptor in catalysis. K(+) is bound at residue Asp114. Thr117 lines the ATP pocket. Position 169 (Thr169) interacts with substrate.

Belongs to the type III pantothenate kinase family. As to quaternary structure, homodimer. NH4(+) serves as cofactor. The cofactor is K(+).

It is found in the cytoplasm. The enzyme catalyses (R)-pantothenate + ATP = (R)-4'-phosphopantothenate + ADP + H(+). Its pathway is cofactor biosynthesis; coenzyme A biosynthesis; CoA from (R)-pantothenate: step 1/5. Its function is as follows. Catalyzes the phosphorylation of pantothenate (Pan), the first step in CoA biosynthesis. The chain is Type III pantothenate kinase from Methylacidiphilum infernorum (isolate V4) (Methylokorus infernorum (strain V4)).